The primary structure comprises 237 residues: Small ribosomal subunit protein uS3 (237 aa).

The 69-residue stretch at 39-107 folds into the KH type-2 domain; sequence IRAYLMEELK…ETHLNIVEVR (69 aa). Residues 213 to 237 form a disordered region; it reads MASERRATESDNQGGSGRERRRENA.

Belongs to the universal ribosomal protein uS3 family. As to quaternary structure, part of the 30S ribosomal subunit. Forms a tight complex with proteins S10 and S14.

Binds the lower part of the 30S subunit head. Binds mRNA in the 70S ribosome, positioning it for translation. The protein is Small ribosomal subunit protein uS3 of Rhizobium meliloti (strain 1021) (Ensifer meliloti).